Here is a 353-residue protein sequence, read N- to C-terminus: Protein RecA (353 aa).

Position 67–74 (67–74) interacts with ATP; it reads GPESSGKT.

It belongs to the RecA family.

The protein localises to the cytoplasm. Functionally, can catalyze the hydrolysis of ATP in the presence of single-stranded DNA, the ATP-dependent uptake of single-stranded DNA by duplex DNA, and the ATP-dependent hybridization of homologous single-stranded DNAs. It interacts with LexA causing its activation and leading to its autocatalytic cleavage. The polypeptide is Protein RecA (Salmonella paratyphi A (strain ATCC 9150 / SARB42)).